Consider the following 192-residue polypeptide: Cytochrome c4 (192 aa).

2 Cytochrome c domains span residues 12-90 and 99-191; these read GDPQ…ATQP and ELAS…QGLS. Cysteine 25, cysteine 28, histidine 29, cysteine 120, cysteine 123, and histidine 124 together coordinate heme c.

Binds 2 heme c groups covalently per subunit.

The protein resides in the periplasm. In terms of biological role, diheme, high potential cytochrome c believed to be an intermediate electron donor in an anaerobic electron transport chain. This is Cytochrome c4 from Thiocapsa roseopersicina.